The chain runs to 204 residues: Tetraspanin-13 (204 aa).

Topologically, residues 1-19 (MVCGGFSCSKNCLCALNLL) are cytoplasmic. The helical transmembrane segment at 20-40 (YTLVSLLLIGIAAWGIGFGLI) threads the bilayer. The Extracellular portion of the chain corresponds to 41-44 (SSLR). A helical membrane pass occupies residues 45-65 (VVGVVIAVGIFLFLIALVGLI). Over 66–72 (GAVKHHQ) the chain is Cytoplasmic. A helical transmembrane segment spans residues 73–93 (VLLFFYMIILLLVFIVQFSVS). Residues 94-167 (CACLALNREQ…IGEYAGEVLR (74 aa)) lie on the Extracellular side of the membrane. 2 N-linked (GlcNAc...) asparagine glycosylation sites follow: N113 and N137. S143 is subject to Phosphoserine. Residues 168 to 188 (FVGGIGLFFSFTEILGVWLTY) traverse the membrane as a helical segment. The Cytoplasmic segment spans residues 189–204 (RYRNQKDPRANPSAFL).

The protein belongs to the tetraspanin (TM4SF) family.

Its subcellular location is the membrane. The polypeptide is Tetraspanin-13 (Tspan13) (Rattus norvegicus (Rat)).